A 310-amino-acid chain; its full sequence is Mitochondrial thiamine pyrophosphate carrier 1 (310 aa).

Helical transmembrane passes span 16–32 (VSPYESLFAGSVSGGVA), 88–104 (ILYVMYGAVQFTTYSAL), 117–141 (IVMPSSVHSLLAGVGAGIASTLTTY), 173–197 (GISGLFAGIRPAMISVASTTGLMFW), 218–234 (ICGFVAGATSKGITFPL), and 274–291 (GYGVSILKTAPTSAISLW). 3 Solcar repeats span residues 16-107 (VSPY…LSKS), 120-205 (PSSV…AREF), and 211-299 (HVPF…VISA).

It belongs to the mitochondrial carrier (TC 2.A.29) family.

It is found in the mitochondrion inner membrane. Functionally, mitochondrial transporter that mediates uptake of thiamine pyrophosphate (ThPP) into mitochondria. This chain is Mitochondrial thiamine pyrophosphate carrier 1 (TPC1), found in Lodderomyces elongisporus (strain ATCC 11503 / CBS 2605 / JCM 1781 / NBRC 1676 / NRRL YB-4239) (Yeast).